The sequence spans 231 residues: RNA pyrophosphohydrolase (231 aa).

In terms of domain architecture, Nudix hydrolase spans 6-149 (GFRPNVGIIL…KRDVYQLALT (144 aa)). The Nudix box signature appears at 38–59 (GGIKYGETPVQAMYRELHEETG). The interval 157–190 (RPQPRTERPGGHHHGQRYPRMASSVNAPPGASMA) is disordered.

It belongs to the Nudix hydrolase family. RppH subfamily. The cofactor is a divalent metal cation.

Functionally, accelerates the degradation of transcripts by removing pyrophosphate from the 5'-end of triphosphorylated RNA, leading to a more labile monophosphorylated state that can stimulate subsequent ribonuclease cleavage. The sequence is that of RNA pyrophosphohydrolase from Paraburkholderia phymatum (strain DSM 17167 / CIP 108236 / LMG 21445 / STM815) (Burkholderia phymatum).